The primary structure comprises 1417 residues: DNA-directed RNA polymerase subunit beta' (1417 aa).

Zn(2+) contacts are provided by cysteine 71, cysteine 73, cysteine 86, and cysteine 89. Mg(2+)-binding residues include aspartate 461, aspartate 463, and aspartate 465. Zn(2+)-binding residues include cysteine 815, cysteine 889, cysteine 896, and cysteine 899.

It belongs to the RNA polymerase beta' chain family. As to quaternary structure, the RNAP catalytic core consists of 2 alpha, 1 beta, 1 beta' and 1 omega subunit. When a sigma factor is associated with the core the holoenzyme is formed, which can initiate transcription. Mg(2+) serves as cofactor. The cofactor is Zn(2+).

It carries out the reaction RNA(n) + a ribonucleoside 5'-triphosphate = RNA(n+1) + diphosphate. Its function is as follows. DNA-dependent RNA polymerase catalyzes the transcription of DNA into RNA using the four ribonucleoside triphosphates as substrates. This is DNA-directed RNA polymerase subunit beta' from Pasteurella multocida (strain Pm70).